A 445-amino-acid polypeptide reads, in one-letter code: GTPase Der (445 aa).

EngA-type G domains follow at residues 3 to 167 and 180 to 353; these read PVIA…NLPD and IKLA…ASAN. GTP is bound by residues 9-16, 56-60, 119-122, 186-193, 233-237, and 298-301; these read GRPNVGKS, DTGGF, NKAE, DTAGL, and NKWD. One can recognise a KH-like domain in the interval 354-438; the sequence is RKMSTPVLTR…PLRIQLKSSV (85 aa).

It belongs to the TRAFAC class TrmE-Era-EngA-EngB-Septin-like GTPase superfamily. EngA (Der) GTPase family. As to quaternary structure, associates with the 50S ribosomal subunit.

In terms of biological role, GTPase that plays an essential role in the late steps of ribosome biogenesis. The protein is GTPase Der of Polaromonas naphthalenivorans (strain CJ2).